We begin with the raw amino-acid sequence, 142 residues long: Hemoglobin subunit alpha (142 aa).

A Globin domain is found at 2-142 (VLSAADKTNV…VSTVLTSKYR (141 aa)). A Phosphoserine modification is found at serine 4. Lysine 8 carries the post-translational modification N6-succinyllysine. Threonine 9 carries the phosphothreonine modification. Lysine 12 carries the N6-succinyllysine modification. Lysine 17 carries the N6-acetyllysine; alternate modification. Lysine 17 bears the N6-succinyllysine; alternate mark. N6-succinyllysine is present on lysine 41. The residue at position 50 (serine 50) is a Phosphoserine. Histidine 59 contacts O2. Histidine 88 is a heme b binding site. Residue serine 103 is modified to Phosphoserine. Threonine 109 bears the Phosphothreonine mark. A Phosphoserine modification is found at serine 125. A phosphothreonine mark is found at threonine 135 and threonine 138. Serine 139 is subject to Phosphoserine.

It belongs to the globin family. Heterotetramer of two alpha chains and two beta chains. In terms of tissue distribution, red blood cells.

Functionally, involved in oxygen transport from the lung to the various peripheral tissues. In terms of biological role, hemopressin acts as an antagonist peptide of the cannabinoid receptor CNR1. Hemopressin-binding efficiently blocks cannabinoid receptor CNR1 and subsequent signaling. The sequence is that of Hemoglobin subunit alpha (HBA) from Equus zebra (Mountain zebra).